A 602-amino-acid polypeptide reads, in one-letter code: Elongation factor 4 (602 aa).

The tr-type G domain occupies 8–190 (DLIRNFSIVA…AIVHRLPPPK (183 aa)). GTP contacts are provided by residues 20–25 (DHGKST) and 137–140 (NKID).

It belongs to the TRAFAC class translation factor GTPase superfamily. Classic translation factor GTPase family. LepA subfamily.

It is found in the cell inner membrane. The enzyme catalyses GTP + H2O = GDP + phosphate + H(+). Its function is as follows. Required for accurate and efficient protein synthesis under certain stress conditions. May act as a fidelity factor of the translation reaction, by catalyzing a one-codon backward translocation of tRNAs on improperly translocated ribosomes. Back-translocation proceeds from a post-translocation (POST) complex to a pre-translocation (PRE) complex, thus giving elongation factor G a second chance to translocate the tRNAs correctly. Binds to ribosomes in a GTP-dependent manner. The polypeptide is Elongation factor 4 (Cereibacter sphaeroides (strain ATCC 17029 / ATH 2.4.9) (Rhodobacter sphaeroides)).